A 232-amino-acid polypeptide reads, in one-letter code: 2-C-methyl-D-erythritol 4-phosphate cytidylyltransferase (232 aa).

Belongs to the IspD/TarI cytidylyltransferase family. IspD subfamily.

It carries out the reaction 2-C-methyl-D-erythritol 4-phosphate + CTP + H(+) = 4-CDP-2-C-methyl-D-erythritol + diphosphate. It functions in the pathway isoprenoid biosynthesis; isopentenyl diphosphate biosynthesis via DXP pathway; isopentenyl diphosphate from 1-deoxy-D-xylulose 5-phosphate: step 2/6. Catalyzes the formation of 4-diphosphocytidyl-2-C-methyl-D-erythritol from CTP and 2-C-methyl-D-erythritol 4-phosphate (MEP). This is 2-C-methyl-D-erythritol 4-phosphate cytidylyltransferase from Geobacter metallireducens (strain ATCC 53774 / DSM 7210 / GS-15).